A 336-amino-acid chain; its full sequence is Holliday junction branch migration complex subunit RuvB (336 aa).

The segment at 1 to 180 is large ATPase domain (RuvB-L); that stretch reads MRRTGIRLSW…FGIVEHLEYY (180 aa). ATP is bound by residues Leu18, Arg19, Gly60, Lys63, Thr64, Thr65, 127–129, Arg170, Tyr180, and Arg217; that span reads EDF. Residue Thr64 coordinates Mg(2+). The segment at 181–251 is small ATPAse domain (RuvB-S); that stretch reads TPEELAQGVM…RALEALAALG (71 aa). Positions 254 to 336 are head domain (RuvB-H); sequence ELGLEKRDRE…PPPVGPLLEP (83 aa). The DNA site is built by Arg309 and Arg314.

The protein belongs to the RuvB family. In terms of assembly, homohexamer. Forms an RuvA(8)-RuvB(12)-Holliday junction (HJ) complex. HJ DNA is sandwiched between 2 RuvA tetramers; dsDNA enters through RuvA and exits via RuvB. An RuvB hexamer assembles on each DNA strand where it exits the tetramer. Each RuvB hexamer is contacted by two RuvA subunits (via domain III) on 2 adjacent RuvB subunits; this complex drives branch migration. In the full resolvosome a probable DNA-RuvA(4)-RuvB(12)-RuvC(2) complex forms which resolves the HJ.

It is found in the cytoplasm. It carries out the reaction ATP + H2O = ADP + phosphate + H(+). The RuvA-RuvB-RuvC complex processes Holliday junction (HJ) DNA during genetic recombination and DNA repair, while the RuvA-RuvB complex plays an important role in the rescue of blocked DNA replication forks via replication fork reversal (RFR). RuvA specifically binds to HJ cruciform DNA, conferring on it an open structure. The RuvB hexamer acts as an ATP-dependent pump, pulling dsDNA into and through the RuvAB complex. RuvB forms 2 homohexamers on either side of HJ DNA bound by 1 or 2 RuvA tetramers; 4 subunits per hexamer contact DNA at a time. Coordinated motions by a converter formed by DNA-disengaged RuvB subunits stimulates ATP hydrolysis and nucleotide exchange. Immobilization of the converter enables RuvB to convert the ATP-contained energy into a lever motion, pulling 2 nucleotides of DNA out of the RuvA tetramer per ATP hydrolyzed, thus driving DNA branch migration. The RuvB motors rotate together with the DNA substrate, which together with the progressing nucleotide cycle form the mechanistic basis for DNA recombination by continuous HJ branch migration. Branch migration allows RuvC to scan DNA until it finds its consensus sequence, where it cleaves and resolves cruciform DNA. This is Holliday junction branch migration complex subunit RuvB from Thermus thermophilus (strain ATCC BAA-163 / DSM 7039 / HB27).